Consider the following 748-residue polypeptide: Semaphorin-3B (748 aa).

The N-terminal stretch at 1 to 25 (MGRAEAAAMIPGLALLWVAGLGDTA) is a signal peptide. One can recognise a Sema domain in the interval 30–512 (RLRLSFQELQ…SRSAVAQIAL (483 aa)). N82 carries an N-linked (GlcNAc...) asparagine glycan. An intrachain disulfide couples C102 to C113. Residue N124 is glycosylated (N-linked (GlcNAc...) asparagine). 5 disulfides stabilise this stretch: C131–C140, C268–C379, C292–C339, C515–C533, and C643–C709. The region spanning 561-659 (PSTLCSGDSS…FSQPLRRLVL (99 aa)) is the Ig-like C2-type domain. The interval 708–748 (MCRPQPGHHSVAADSRRKGRNRRMHVSELRAERGPRSAAHW) is disordered. Over residues 732 to 742 (HVSELRAERGP) the composition is skewed to basic and acidic residues.

This sequence belongs to the semaphorin family.

It is found in the secreted. Inhibits axonal extension by providing local signals to specify territories inaccessible for growing axons. The polypeptide is Semaphorin-3B (Sema3b) (Mus musculus (Mouse)).